A 1207-amino-acid polypeptide reads, in one-letter code: Putative coatomer subunit alpha (1207 aa).

WD repeat units follow at residues 9-50, 51-90, 93-134, 135-174, 210-249, 254-293, 296-336, and 370-411; these read SRSS…DRFD, GHDGPVRGIAFHPTQPLFVSGGDDYKVNVWNYKSRKLLFS, GHMD…AILT, GHSHYVMCAAFHPSEDLIVSASLDQTVRVWDISGLRMKNA, GHDRGVNWCAFHPTLPLILSAGDDRLVKLWRMTASKAWEV, GHFNNVSCCLFHPHQELILSASEDKTIRVWDLNRRTAVQT, RDND…HALN, and SAWL…NSLP. Residues serine 409 and serine 942 each carry the phosphoserine modification.

As to quaternary structure, oligomeric complex that consists of at least the alpha, beta, beta', gamma, delta, epsilon and zeta subunits.

It localises to the cytoplasm. The protein localises to the golgi apparatus membrane. The coatomer is a cytosolic protein complex that binds to dilysine motifs and reversibly associates with Golgi non-clathrin-coated vesicles, which further mediate biosynthetic protein transport from the ER, via the Golgi up to the trans Golgi network. Coatomer complex is required for budding from Golgi membranes, and is essential for the retrograde Golgi-to-ER transport of dilysine-tagged proteins. The chain is Putative coatomer subunit alpha from Schizosaccharomyces pombe (strain 972 / ATCC 24843) (Fission yeast).